Consider the following 109-residue polypeptide: uncharacterized protein (109 aa).

The helical transmembrane segment at 29 to 49 (ITIIITLVIIFIIFTLIILYF) threads the bilayer.

Its subcellular location is the membrane. This is an uncharacterized protein from Sputnik virophage.